The sequence spans 169 residues: Oleosin Cor a 15 (169 aa).

2 helical membrane-spanning segments follow: residues 38–58 (IAVV…GLTF) and 70–90 (PLFV…GLAV). The Proline-knot motif lies at 70–81 (PLFVLCSPVLVP). 2 stretches are compositionally biased toward basic and acidic residues: residues 122–131 (QMEHAKRRAQ) and 160–169 (EGGRGEEKKT). Positions 122 to 169 (QMEHAKRRAQDTAGHLGQKARETGQTVTGKGQEAGKTLEGGRGEEKKT) are disordered.

It belongs to the oleosin family. As to expression, expressed in seeds (at protein level).

It is found in the lipid droplet. The protein localises to the membrane. In terms of biological role, may have a structural role to stabilize the lipid body during desiccation of the seed by preventing coalescence of the oil. Probably interacts with both lipid and phospholipid moieties of lipid bodies. May also provide recognition signals for specific lipase anchorage in lipolysis during seedling growth. This is Oleosin Cor a 15 from Corylus avellana (European hazel).